We begin with the raw amino-acid sequence, 219 residues long: Chalcone--flavanone isomerase (219 aa).

Residues threonine 50, asparagine 115, and serine 188 each contribute to the substrate site.

Belongs to the chalcone isomerase family.

It catalyses the reaction a chalcone = a flavanone.. It functions in the pathway secondary metabolite biosynthesis; flavonoid biosynthesis. Catalyzes the intramolecular cyclization of bicyclic chalcones into tricyclic (S)-flavanones. Responsible for the isomerization of 4,2',4',6'-tetrahydroxychalcone (also termed chalcone) into naringenin. In Clitoria ternatea (Butterfly pea), this protein is Chalcone--flavanone isomerase (CHI).